The chain runs to 410 residues: Ribosomal RNA large subunit methyltransferase G (410 aa).

It belongs to the methyltransferase superfamily. RlmG family.

It localises to the cytoplasm. It catalyses the reaction guanosine(1835) in 23S rRNA + S-adenosyl-L-methionine = N(2)-methylguanosine(1835) in 23S rRNA + S-adenosyl-L-homocysteine + H(+). In terms of biological role, specifically methylates the guanine in position 1835 (m2G1835) of 23S rRNA. This Alteromonas mediterranea (strain DSM 17117 / CIP 110805 / LMG 28347 / Deep ecotype) protein is Ribosomal RNA large subunit methyltransferase G.